A 210-amino-acid polypeptide reads, in one-letter code: Outer-membrane lipoprotein LolB (210 aa).

A signal peptide spans 1–18 (MKKLTKLLSLTLLFALAG). C19 carries the N-palmitoyl cysteine lipid modification. C19 is lipidated: S-diacylglycerol cysteine.

Belongs to the LolB family. In terms of assembly, monomer.

The protein resides in the cell outer membrane. Functionally, plays a critical role in the incorporation of lipoproteins in the outer membrane after they are released by the LolA protein. This Glaesserella parasuis serovar 5 (strain SH0165) (Haemophilus parasuis) protein is Outer-membrane lipoprotein LolB.